The following is a 617-amino-acid chain: RNA polymerase sigma factor RpoD (617 aa).

The interval 192 to 222 (NITNDSNENEDENEDENEDEDENSIDPELAN) is disordered. A compositionally biased stretch (acidic residues) spans 198–216 (NENEDENEDENEDEDENSI). The sigma-70 factor domain-2 stretch occupies residues 383 to 453 (MVEANLRLVI…TRSIADQART (71 aa)). The Interaction with polymerase core subunit RpoC signature appears at 407–410 (DLIQ). The tract at residues 462–538 (ETINKLNRIS…DTTLELPLDS (77 aa)) is sigma-70 factor domain-3. Residues 551 to 604 (VLSGLTAREAKVLRMRFGIDMNTDHTLEEVGKQFDVTRERIRQIEAKALRKLRH) are sigma-70 factor domain-4. The segment at residues 577–596 (LEEVGKQFDVTRERIRQIEA) is a DNA-binding region (H-T-H motif).

The protein belongs to the sigma-70 factor family. RpoD/SigA subfamily. Interacts transiently with the RNA polymerase catalytic core.

It is found in the cytoplasm. In terms of biological role, sigma factors are initiation factors that promote the attachment of RNA polymerase to specific initiation sites and are then released. This sigma factor is the primary sigma factor during exponential growth. In Buchnera aphidicola subsp. Schizaphis graminum (strain Sg), this protein is RNA polymerase sigma factor RpoD.